The chain runs to 720 residues: Catalase-peroxidase (720 aa).

A cross-link (tryptophyl-tyrosyl-methioninium (Trp-Tyr) (with M-233)) is located at residues 82-207 (WHSAGTYRTF…LGNTVMGLIY (126 aa)). The active-site Proton acceptor is the His-83. Residues 207–233 (YVNPEGPNGEPDLEGSAKNIRESFGKM) constitute a cross-link (tryptophyl-tyrosyl-methioninium (Tyr-Met) (with W-82)). A heme b-binding site is contributed by His-248.

This sequence belongs to the peroxidase family. Peroxidase/catalase subfamily. Homodimer or homotetramer. Heme b serves as cofactor. Formation of the three residue Trp-Tyr-Met cross-link is important for the catalase, but not the peroxidase activity of the enzyme.

The enzyme catalyses H2O2 + AH2 = A + 2 H2O. It catalyses the reaction 2 H2O2 = O2 + 2 H2O. Functionally, bifunctional enzyme with both catalase and broad-spectrum peroxidase activity. This Halobacterium salinarum (strain ATCC 29341 / DSM 671 / R1) protein is Catalase-peroxidase.